We begin with the raw amino-acid sequence, 141 residues long: Universal stress protein A homolog (141 aa).

The protein belongs to the universal stress protein A family. As to quaternary structure, homodimer.

It localises to the cytoplasm. Required for resistance to DNA-damaging agents. This chain is Universal stress protein A homolog (uspA), found in Haemophilus influenzae (strain ATCC 51907 / DSM 11121 / KW20 / Rd).